The following is a 225-amino-acid chain: NAD(P)H-quinone oxidoreductase subunit K, chloroplastic (225 aa).

Cys-43, Cys-44, Cys-108, and Cys-139 together coordinate [4Fe-4S] cluster.

This sequence belongs to the complex I 20 kDa subunit family. In terms of assembly, NDH is composed of at least 16 different subunits, 5 of which are encoded in the nucleus. [4Fe-4S] cluster serves as cofactor.

Its subcellular location is the plastid. The protein localises to the chloroplast thylakoid membrane. The enzyme catalyses a plastoquinone + NADH + (n+1) H(+)(in) = a plastoquinol + NAD(+) + n H(+)(out). It catalyses the reaction a plastoquinone + NADPH + (n+1) H(+)(in) = a plastoquinol + NADP(+) + n H(+)(out). Its function is as follows. NDH shuttles electrons from NAD(P)H:plastoquinone, via FMN and iron-sulfur (Fe-S) centers, to quinones in the photosynthetic chain and possibly in a chloroplast respiratory chain. The immediate electron acceptor for the enzyme in this species is believed to be plastoquinone. Couples the redox reaction to proton translocation, and thus conserves the redox energy in a proton gradient. The chain is NAD(P)H-quinone oxidoreductase subunit K, chloroplastic from Crucihimalaya wallichii (Rock-cress).